Consider the following 65-residue polypeptide: Large ribosomal subunit protein bL35 (65 aa).

A disordered region spans residues 1–21 (MPKMKTKSGAAKRFTVRAGGT).

This sequence belongs to the bacterial ribosomal protein bL35 family.

The polypeptide is Large ribosomal subunit protein bL35 (Nitrosospira multiformis (strain ATCC 25196 / NCIMB 11849 / C 71)).